The sequence spans 332 residues: Invasin IpaD (332 aa).

Positions 1 to 25 are enriched in low complexity; it reads MNITTLTNSISTSSFSPNNTNGSST. Residues 1 to 43 are disordered; that stretch reads MNITTLTNSISTSSFSPNNTNGSSTETVNSDIKTTTSSHPVSS. Residues 26 to 43 show a composition bias toward polar residues; sequence ETVNSDIKTTTSSHPVSS. Positions 44-77 form a coiled coil; that stretch reads LTMLNDTLHNIRTTNQALKKELSQKTLTKTSLEE. The tract at residues 192–267 is ipaB binding; the sequence is VNSLKKALEE…KSLDNLGGNG (76 aa).

This sequence belongs to the invasin protein D family.

The protein resides in the secreted. Functionally, required for bacterial invasion of host cells. Controls IpaB and IpaC secretion, and the efficiency with which they are physically inserted into target cell membranes. These proteins are exported via T3SS to form a pore in the host membrane that allows the translocation of the other effectors into the host cytoplasm. Along with IpaB, is essential for both blocking secretion through the Mxi/Spa translocon in the absence of a secretion-inducing signal, and for controlling the level of secretion in the presence of this signal. The chain is Invasin IpaD (ipaD) from Shigella flexneri.